The following is a 473-amino-acid chain: G2/mitotic-specific cyclin-1 (473 aa).

The span at 1 to 12 (MGSRNIVQQQNR) shows a compositional bias: polar residues. Disordered stretches follow at residues 1–23 (MGSR…AMKQ) and 134–155 (KEKP…APTL). Residues 134–147 (KEKPIEKEKAAEKS) show a composition bias toward basic and acidic residues.

Belongs to the cyclin family. Cyclin AB subfamily. As to quaternary structure, interacts with the CDC2 and CDK2 protein kinases to form a serine/threonine kinase holoenzyme complex. The cyclin subunit imparts substrate specificity to the complex.

Functionally, essential for the control of the cell cycle at the G2/M (mitosis) transition. G2/M cyclins accumulate steadily during G2 and are abruptly destroyed at mitosis. The protein is G2/mitotic-specific cyclin-1 of Antirrhinum majus (Garden snapdragon).